Consider the following 362-residue polypeptide: Peptide chain release factor 1 (362 aa).

N5-methylglutamine is present on Gln237.

This sequence belongs to the prokaryotic/mitochondrial release factor family. In terms of processing, methylated by PrmC. Methylation increases the termination efficiency of RF1.

It localises to the cytoplasm. In terms of biological role, peptide chain release factor 1 directs the termination of translation in response to the peptide chain termination codons UAG and UAA. This chain is Peptide chain release factor 1 (prfA), found in Aquifex aeolicus (strain VF5).